Reading from the N-terminus, the 203-residue chain is Small ribosomal subunit protein uS4 (203 aa).

The region spanning 93 to 156 (RRLDNVVYRL…MKVPAILEAV (64 aa)) is the S4 RNA-binding domain.

Belongs to the universal ribosomal protein uS4 family. In terms of assembly, part of the 30S ribosomal subunit. Contacts protein S5. The interaction surface between S4 and S5 is involved in control of translational fidelity.

Its function is as follows. One of the primary rRNA binding proteins, it binds directly to 16S rRNA where it nucleates assembly of the body of the 30S subunit. With S5 and S12 plays an important role in translational accuracy. In Streptococcus uberis (strain ATCC BAA-854 / 0140J), this protein is Small ribosomal subunit protein uS4.